Consider the following 132-residue polypeptide: Antimicrobial protein Ace-AMP1 (132 aa).

The N-terminal stretch at 1–27 (MVRVVSLLAASTFILLIMIISSPYANS) is a signal peptide. 4 cysteine pairs are disulfide-bonded: cysteine 31-cysteine 76, cysteine 41-cysteine 54, cysteine 55-cysteine 100, and cysteine 74-cysteine 116.

The protein belongs to the plant LTP family. Highly divergent. As to quaternary structure, monomer.

In terms of biological role, antifungal and antibacterial activity against the Gram-positive bacteria B.megaterium and S.lutea. The chain is Antimicrobial protein Ace-AMP1 from Allium cepa (Onion).